The sequence spans 394 residues: 1-deoxy-D-xylulose 5-phosphate reductoisomerase (394 aa).

Residues Thr12, Gly13, Ser14, Ile15, Lys39, Gln40, and Asn126 each coordinate NADPH. Lys127 lines the 1-deoxy-D-xylulose 5-phosphate pocket. Glu128 is a binding site for NADPH. Asp152 provides a ligand contact to Mn(2+). 1-deoxy-D-xylulose 5-phosphate-binding residues include Ser153, Glu154, Ser183, and His206. Residue Glu154 coordinates Mn(2+). Gly212 contacts NADPH. Positions 219, 224, 225, and 228 each coordinate 1-deoxy-D-xylulose 5-phosphate. Residue Glu228 participates in Mn(2+) binding.

This sequence belongs to the DXR family. It depends on Mg(2+) as a cofactor. Mn(2+) serves as cofactor.

It carries out the reaction 2-C-methyl-D-erythritol 4-phosphate + NADP(+) = 1-deoxy-D-xylulose 5-phosphate + NADPH + H(+). It functions in the pathway isoprenoid biosynthesis; isopentenyl diphosphate biosynthesis via DXP pathway; isopentenyl diphosphate from 1-deoxy-D-xylulose 5-phosphate: step 1/6. In terms of biological role, catalyzes the NADPH-dependent rearrangement and reduction of 1-deoxy-D-xylulose-5-phosphate (DXP) to 2-C-methyl-D-erythritol 4-phosphate (MEP). The chain is 1-deoxy-D-xylulose 5-phosphate reductoisomerase from Neisseria meningitidis serogroup A / serotype 4A (strain DSM 15465 / Z2491).